The following is a 338-amino-acid chain: UDP-3-O-acylglucosamine N-acyltransferase (338 aa).

H239 acts as the Proton acceptor in catalysis.

The protein belongs to the transferase hexapeptide repeat family. LpxD subfamily. In terms of assembly, homotrimer.

It catalyses the reaction a UDP-3-O-[(3R)-3-hydroxyacyl]-alpha-D-glucosamine + a (3R)-hydroxyacyl-[ACP] = a UDP-2-N,3-O-bis[(3R)-3-hydroxyacyl]-alpha-D-glucosamine + holo-[ACP] + H(+). Its pathway is bacterial outer membrane biogenesis; LPS lipid A biosynthesis. Functionally, catalyzes the N-acylation of UDP-3-O-acylglucosamine using 3-hydroxyacyl-ACP as the acyl donor. Is involved in the biosynthesis of lipid A, a phosphorylated glycolipid that anchors the lipopolysaccharide to the outer membrane of the cell. In Xylella fastidiosa (strain 9a5c), this protein is UDP-3-O-acylglucosamine N-acyltransferase.